Reading from the N-terminus, the 568-residue chain is Estrogen receptor beta (568 aa).

The segment at 1–177 is modulating; that stretch reads MHQQSPVDDV…SLRGKADMHY (177 aa). 2 consecutive NR C4-type zinc fingers follow at residues 178–198 and 214–238; these read CAVCSDYASGYHYGVWSCEGC and CPATNQCTIDKNRRKSCQACRLRKC. The segment at residues 178–243 is a DNA-binding region (nuclear receptor); it reads CAVCSDYASG…RLRKCYEVGM (66 aa). The 237-residue stretch at 300–536 folds into the NR LBD domain; that stretch reads TPEELIARIM…DLLLEMLDAH (237 aa).

It belongs to the nuclear hormone receptor family. NR3 subfamily. As to quaternary structure, binds DNA as a homodimer. Can form a heterodimer with ER-alpha.

It is found in the nucleus. In terms of biological role, binds estrogens with an affinity similar to that of ER-alpha, and activates expression of reporter genes containing estrogen response elements (ERE) in an estrogen-dependent manner. This Oncorhynchus mykiss (Rainbow trout) protein is Estrogen receptor beta (esr2).